Consider the following 72-residue polypeptide: MAKDDVIEIEGKVTDTLPNAMFKVELENGAVILAHVSGKIRKNYIKILPGDRVTVELSPYDLTKGRITYRFK.

The 72-residue stretch at 1–72 (MAKDDVIEIE…TKGRITYRFK (72 aa)) folds into the S1-like domain.

Belongs to the IF-1 family. In terms of assembly, component of the 30S ribosomal translation pre-initiation complex which assembles on the 30S ribosome in the order IF-2 and IF-3, IF-1 and N-formylmethionyl-tRNA(fMet); mRNA recruitment can occur at any time during PIC assembly.

The protein localises to the cytoplasm. Its function is as follows. One of the essential components for the initiation of protein synthesis. Stabilizes the binding of IF-2 and IF-3 on the 30S subunit to which N-formylmethionyl-tRNA(fMet) subsequently binds. Helps modulate mRNA selection, yielding the 30S pre-initiation complex (PIC). Upon addition of the 50S ribosomal subunit IF-1, IF-2 and IF-3 are released leaving the mature 70S translation initiation complex. This chain is Translation initiation factor IF-1, found in Latilactobacillus sakei subsp. sakei (strain 23K) (Lactobacillus sakei subsp. sakei).